The chain runs to 256 residues: Omega-amidase YafV (256 aa).

The CN hydrolase domain maps to 4–234 (LKLTLLQQPL…AAQLDAELSL (231 aa)). Residue E42 is the Proton acceptor of the active site. Residue K107 is part of the active site. C141 serves as the catalytic Nucleophile.

The protein belongs to the carbon-nitrogen hydrolase superfamily. NIT1/NIT2 family.

The enzyme catalyses a monoamide of a dicarboxylate + H2O = a dicarboxylate + NH4(+). Functionally, hydrolyzes alpha-ketoglutaramate (a-KGM) to alpha-ketoglutarate (alpha-KG) and ammonia (specific activity 21 umol/min/mg), has very weak activity on L-glutamine, and no activity on deaminated glutathione (dGSH) or glutathione. May function as a metabolite repair enzyme. In Yersinia enterocolitica, this protein is Omega-amidase YafV.